A 156-amino-acid polypeptide reads, in one-letter code: Ribosomal RNA large subunit methyltransferase H (156 aa).

S-adenosyl-L-methionine-binding positions include Leu73, Gly104, and 123–128 (LSALTL).

Belongs to the RNA methyltransferase RlmH family. As to quaternary structure, homodimer.

It localises to the cytoplasm. It catalyses the reaction pseudouridine(1915) in 23S rRNA + S-adenosyl-L-methionine = N(3)-methylpseudouridine(1915) in 23S rRNA + S-adenosyl-L-homocysteine + H(+). Its function is as follows. Specifically methylates the pseudouridine at position 1915 (m3Psi1915) in 23S rRNA. The polypeptide is Ribosomal RNA large subunit methyltransferase H (Shewanella sp. (strain MR-7)).